The following is a 661-amino-acid chain: uncharacterized protein (661 aa).

The next 16 membrane-spanning stretches (helical) occupy residues Leu-27 to Ala-47, Val-68 to Val-88, Leu-116 to Gly-136, Val-150 to Ala-170, Trp-179 to Thr-199, Ala-214 to Leu-234, Gly-251 to Val-271, Gly-279 to Val-299, Gly-313 to Ala-333, Ser-369 to Leu-389, Trp-396 to Gly-416, Met-435 to Leu-455, Pro-488 to Phe-508, Glu-519 to Ile-539, Ile-552 to Met-572, and Gly-599 to Val-619.

To M.leprae ML1998.

It localises to the cell membrane. This is an uncharacterized protein from Mycobacterium tuberculosis (strain CDC 1551 / Oshkosh).